Consider the following 44-residue polypeptide: Large ribosomal subunit protein bL36 (44 aa).

The protein belongs to the bacterial ribosomal protein bL36 family.

The sequence is that of Large ribosomal subunit protein bL36 from Pseudoalteromonas translucida (strain TAC 125).